A 262-amino-acid polypeptide reads, in one-letter code: Tryptophan synthase alpha chain (262 aa).

Residues Glu48 and Asp59 each act as proton acceptor in the active site.

Belongs to the TrpA family. Tetramer of two alpha and two beta chains.

It carries out the reaction (1S,2R)-1-C-(indol-3-yl)glycerol 3-phosphate + L-serine = D-glyceraldehyde 3-phosphate + L-tryptophan + H2O. The protein operates within amino-acid biosynthesis; L-tryptophan biosynthesis; L-tryptophan from chorismate: step 5/5. Functionally, the alpha subunit is responsible for the aldol cleavage of indoleglycerol phosphate to indole and glyceraldehyde 3-phosphate. The chain is Tryptophan synthase alpha chain from Helicobacter pylori (strain Shi470).